The chain runs to 382 residues: L-arabinitol 4-dehydrogenase (382 aa).

Zn(2+)-binding residues include C55, H80, E81, C110, C113, C116, C124, and E165. NAD(+)-binding positions include 192 to 193 (PI), D213, R218, I293, and 317 to 319 (QYR).

Belongs to the zinc-containing alcohol dehydrogenase family. Homotetramer. Requires Zn(2+) as cofactor.

The enzyme catalyses L-arabinitol + NAD(+) = L-xylulose + NADH + H(+). Its pathway is carbohydrate degradation; L-arabinose degradation via L-arabinitol; D-xylulose 5-phosphate from L-arabinose (fungal route): step 2/5. Functionally, catalyzes the NAD-dependent oxidation of L-arabinitol to L-xylulose in the fungal L-arabinose catabolic pathway. L-arabinose catabolism is important for using plant material as a carbon source. Also active on ribitol and xylitol. Not active with NADP as cosubstrate. This is L-arabinitol 4-dehydrogenase (ladA) from Aspergillus oryzae (Yellow koji mold).